The chain runs to 100 residues: MGTRFLLALFLVLLVLGFEVQGAQLPQQDEPSSPTLLTQMQESLSSYWDSAKEAARGLYEKTYLPTVDEKLRDMYSKSTAAVSTYAGIFTDQLLTLLKGD.

The N-terminal stretch at 1 to 22 (MGTRFLLALFLVLLVLGFEVQG) is a signal peptide. The tract at residues 66–74 (TVDEKLRDM) is lipid binding. The segment at 78–100 (STAAVSTYAGIFTDQLLTLLKGD) is lipoprotein lipase cofactor.

Belongs to the apolipoprotein C2 family. In terms of processing, proapolipoprotein C-II is synthesized as a sialic acid containing glycoprotein which is subsequently desialylated prior to its proteolytic processing. Post-translationally, proapolipoprotein C-II, the major form found in plasma undergoes proteolytic cleavage of its N-terminal hexapeptide to generate apolipoprotein C-II, which occurs as the minor form in plasma.

It is found in the secreted. In terms of biological role, component of chylomicrons, very low-density lipoproteins (VLDL), low-density lipoproteins (LDL), and high-density lipoproteins (HDL) in plasma. Plays an important role in lipoprotein metabolism as an activator of lipoprotein lipase. Both proapolipoprotein C-II and apolipoprotein C-II can activate lipoprotein lipase. The sequence is that of Apolipoprotein C-II (APOC2) from Otolemur garnettii (Small-eared galago).